Here is a 234-residue protein sequence, read N- to C-terminus: Lactate utilization protein C 1 (234 aa).

The protein belongs to the LutC/YkgG family.

Is involved in L-lactate degradation and allows cells to grow with lactate as the sole carbon source. The sequence is that of Lactate utilization protein C 1 from Bacillus mycoides (strain KBAB4) (Bacillus weihenstephanensis).